The sequence spans 450 residues: Homogentisate 1,2-dioxygenase (450 aa).

His304 (proton acceptor) is an active-site residue. 2 residues coordinate Fe cation: His347 and Glu353. Homogentisate-binding residues include Tyr362 and His383. His383 contacts Fe cation.

Belongs to the homogentisate dioxygenase family. As to quaternary structure, hexamer; dimer of trimers. Requires Fe cation as cofactor.

The enzyme catalyses homogentisate + O2 = 4-maleylacetoacetate + H(+). Its pathway is amino-acid degradation; L-phenylalanine degradation; acetoacetate and fumarate from L-phenylalanine: step 4/6. In terms of biological role, involved in the catabolism of homogentisate (2,5-dihydroxyphenylacetate or 2,5-OH-PhAc), a central intermediate in the degradation of phenylalanine and tyrosine. Catalyzes the oxidative ring cleavage of the aromatic ring of homogentisate to yield maleylacetoacetate. This is Homogentisate 1,2-dioxygenase from Burkholderia mallei (strain NCTC 10229).